Consider the following 606-residue polypeptide: Melanoma-associated antigen D2 (606 aa).

The disordered stretch occupies residues 1–204 (MSDTSESGAG…QASGTTGGRR (204 aa)). Ser-2 bears the N-acetylserine mark. Ser-5 carries the phosphoserine modification. Polar residues predominate over residues 24 to 37 (SSMMQTLLTVTQNV). Thr-72 carries the phosphothreonine modification. Polar residues predominate over residues 81–93 (TQASSTTQLTDTQ). Residues 122-131 (ETKKVSHVAD) show a composition bias toward basic and acidic residues. Residues 142–164 (EAAPSQAPADEPEPESAAAQSQE) show a composition bias toward low complexity. The residue at position 157 (Ser-157) is a Phosphoserine. The segment covering 171 to 181 (KVKAKKARKVK) has biased composition (basic residues). Residues Ser-190, Ser-191, Ser-194, Ser-197, Ser-244, and Ser-247 each carry the phosphoserine modification. A compositionally biased stretch (basic residues) spans 248–260 (PKARRGKARRRAA). Residues 248–275 (PKARRGKARRRAAKLQSSQEPEAPPPRD) form a disordered region. Phosphoserine is present on residues Ser-264 and Ser-265. Residues 279 to 478 (LQGRANDLVK…KEWAAQYREA (200 aa)) form the MAGE domain. Residues 534–563 (GAEAKAKAQESGSASTGASTSTNNSASASA) are disordered.

As to quaternary structure, interacts with GNAS. May interact with DNAJB1. As to expression, widely expressed. In the developing and adult kidney, expressed in the thick ascending limb of the loop of Henle and the distal convoluted tubules outside the loop.

Functionally, regulates the expression, localization to the plasma membrane and function of the sodium chloride cotransporters SLC12A1 and SLC12A3, two key components of salt reabsorption in the distal renal tubule. In Homo sapiens (Human), this protein is Melanoma-associated antigen D2 (MAGED2).